The primary structure comprises 148 residues: Large ribosomal subunit protein bL27m (148 aa).

A mitochondrion-targeting transit peptide spans 1-30 (MALAVLAWRTRTAVIALLSPPQAAALAVRY).

The protein belongs to the bacterial ribosomal protein bL27 family. Component of the mitochondrial ribosome large subunit (39S) which comprises a 16S rRNA and about 50 distinct proteins.

It localises to the mitochondrion. This chain is Large ribosomal subunit protein bL27m (MRPL27), found in Bos taurus (Bovine).